The sequence spans 188 residues: Peptidyl-tRNA hydrolase (188 aa).

Tyr14 lines the tRNA pocket. His19 (proton acceptor) is an active-site residue. Positions 64, 66, and 112 each coordinate tRNA.

It belongs to the PTH family. In terms of assembly, monomer.

It localises to the cytoplasm. The enzyme catalyses an N-acyl-L-alpha-aminoacyl-tRNA + H2O = an N-acyl-L-amino acid + a tRNA + H(+). Hydrolyzes ribosome-free peptidyl-tRNAs (with 1 or more amino acids incorporated), which drop off the ribosome during protein synthesis, or as a result of ribosome stalling. Functionally, catalyzes the release of premature peptidyl moieties from peptidyl-tRNA molecules trapped in stalled 50S ribosomal subunits, and thus maintains levels of free tRNAs and 50S ribosomes. In Bacillus licheniformis (strain ATCC 14580 / DSM 13 / JCM 2505 / CCUG 7422 / NBRC 12200 / NCIMB 9375 / NCTC 10341 / NRRL NRS-1264 / Gibson 46), this protein is Peptidyl-tRNA hydrolase.